A 137-amino-acid polypeptide reads, in one-letter code: MVSHKPSKQRLLLYNLPKHQRHKLLTAKLSKELQQQYGIKRLAIRKGDTVKVMRGDKDVLNFEGKVVEVNRKTGRIAIEGLTRKKADGTPVYRWIHASKVIITKLDLSDAKRKEIIERKRKAREEYLKKKEQTTEAK.

It belongs to the universal ribosomal protein uL24 family. Part of the 50S ribosomal subunit.

In terms of biological role, one of two assembly initiator proteins, it binds directly to the 5'-end of the 23S rRNA, where it nucleates assembly of the 50S subunit. Its function is as follows. Located at the polypeptide exit tunnel on the outside of the subunit. The protein is Large ribosomal subunit protein uL24 of Sulfurisphaera tokodaii (strain DSM 16993 / JCM 10545 / NBRC 100140 / 7) (Sulfolobus tokodaii).